The sequence spans 149 residues: Macrodomain Ter protein (149 aa).

This sequence belongs to the MatP family. In terms of assembly, homodimer.

The protein localises to the cytoplasm. Required for spatial organization of the terminus region of the chromosome (Ter macrodomain) during the cell cycle. Prevents early segregation of duplicated Ter macrodomains during cell division. Binds specifically to matS, which is a 13 bp signature motif repeated within the Ter macrodomain. In Vibrio parahaemolyticus serotype O3:K6 (strain RIMD 2210633), this protein is Macrodomain Ter protein.